The sequence spans 243 residues: Probable heat shock transcription factor (243 aa).

Residues 9-102 (INKFIRRLYK…GDNLLPCIQR (94 aa)) mediate DNA binding. The tract at residues 121-164 (QLQDLLQYLNNQNFKLEGEIKSLKDRVDQQDCTINGLVQLLTRI) is involved in trimerization.

Belongs to the HSF family. Homotrimer. Homotrimerization increases the affinity of HSF1 to DNA.

Its subcellular location is the nucleus. Its function is as follows. DNA-binding transcription factor that specifically binds heat shock promoter elements (HSE) and activates transcription. This Vairimorpha ceranae (strain BRL01) (Microsporidian parasite) protein is Probable heat shock transcription factor.